A 214-amino-acid chain; its full sequence is Thiopurine S-methyltransferase (214 aa).

The S-adenosyl-L-methionine site is built by Trp-10, Leu-44, Glu-65, and Arg-122.

It belongs to the class I-like SAM-binding methyltransferase superfamily. TPMT family.

It is found in the cytoplasm. It carries out the reaction S-adenosyl-L-methionine + a thiopurine = S-adenosyl-L-homocysteine + a thiopurine S-methylether.. The chain is Thiopurine S-methyltransferase from Teredinibacter turnerae (strain ATCC 39867 / T7901).